We begin with the raw amino-acid sequence, 1404 residues long: DNA-directed RNA polymerase subunit beta' (1404 aa).

Zn(2+) contacts are provided by cysteine 60, cysteine 62, cysteine 75, and cysteine 78. Mg(2+)-binding residues include aspartate 449, aspartate 451, and aspartate 453. Zn(2+) is bound by residues cysteine 778, cysteine 852, cysteine 859, and cysteine 862. A disordered region spans residues 1380–1404 (LDRPLEEEEEEEIPQAIAEESDAEE). Acidic residues predominate over residues 1384–1404 (LEEEEEEEIPQAIAEESDAEE).

This sequence belongs to the RNA polymerase beta' chain family. In terms of assembly, the RNAP catalytic core consists of 2 alpha, 1 beta, 1 beta' and 1 omega subunit. When a sigma factor is associated with the core the holoenzyme is formed, which can initiate transcription. The cofactor is Mg(2+). Zn(2+) serves as cofactor.

It carries out the reaction RNA(n) + a ribonucleoside 5'-triphosphate = RNA(n+1) + diphosphate. DNA-dependent RNA polymerase catalyzes the transcription of DNA into RNA using the four ribonucleoside triphosphates as substrates. This chain is DNA-directed RNA polymerase subunit beta', found in Leptospira interrogans serogroup Icterohaemorrhagiae serovar Lai (strain 56601).